Consider the following 412-residue polypeptide: Proteasome-activating nucleotidase (412 aa).

Positions 18–72 form a coiled coil; the sequence is YRYLVDRVAGMESQNQELKEQIRQLESDKRYIETQKIRYEREVRKLKSEIEHLKT. ATP is bound by residues 197 to 202 and His336; that span reads GTGKTL. The interval 410-412 is docks into pockets in the proteasome alpha-ring to cause gate opening; the sequence is MFA.

Belongs to the AAA ATPase family. Homohexamer. The hexameric complex has a two-ring architecture resembling a top hat that caps the 20S proteasome core at one or both ends. Upon ATP-binding, the C-terminus of PAN interacts with the alpha-rings of the proteasome core by binding to the intersubunit pockets.

The protein resides in the cytoplasm. Functionally, ATPase which is responsible for recognizing, binding, unfolding and translocation of substrate proteins into the archaeal 20S proteasome core particle. Is essential for opening the gate of the 20S proteasome via an interaction with its C-terminus, thereby allowing substrate entry and access to the site of proteolysis. Thus, the C-termini of the proteasomal ATPase function like a 'key in a lock' to induce gate opening and therefore regulate proteolysis. Unfolding activity requires energy from ATP hydrolysis, whereas ATP binding alone promotes ATPase-20S proteasome association which triggers gate opening, and supports translocation of unfolded substrates. This is Proteasome-activating nucleotidase from Methanospirillum hungatei JF-1 (strain ATCC 27890 / DSM 864 / NBRC 100397 / JF-1).